Reading from the N-terminus, the 263-residue chain is uncharacterized protein (263 aa).

The tract at residues 183-263 (APHDRPEGVP…PPSTNTKGAA (81 aa)) is disordered. 2 stretches are compositionally biased toward polar residues: residues 230–239 (SRPTAPSRPS) and 253–263 (TPPSTNTKGAA).

In terms of biological role, probably does not play a direct role in plasmid integration or excision. This is an uncharacterized protein from Saccharopolyspora erythraea (Streptomyces erythraeus).